The sequence spans 73 residues: Translation initiation factor IF-1 (73 aa).

Residues 1 to 73 enclose the S1-like domain; the sequence is MPKKDGVIEI…SRGRIVYRYK (73 aa).

This sequence belongs to the IF-1 family. Component of the 30S ribosomal translation pre-initiation complex which assembles on the 30S ribosome in the order IF-2 and IF-3, IF-1 and N-formylmethionyl-tRNA(fMet); mRNA recruitment can occur at any time during PIC assembly.

It localises to the cytoplasm. One of the essential components for the initiation of protein synthesis. Stabilizes the binding of IF-2 and IF-3 on the 30S subunit to which N-formylmethionyl-tRNA(fMet) subsequently binds. Helps modulate mRNA selection, yielding the 30S pre-initiation complex (PIC). Upon addition of the 50S ribosomal subunit IF-1, IF-2 and IF-3 are released leaving the mature 70S translation initiation complex. The polypeptide is Translation initiation factor IF-1 (Kineococcus radiotolerans (strain ATCC BAA-149 / DSM 14245 / SRS30216)).